The sequence spans 425 residues: Histidine--tRNA ligase (425 aa).

It belongs to the class-II aminoacyl-tRNA synthetase family. Homodimer.

Its subcellular location is the cytoplasm. It carries out the reaction tRNA(His) + L-histidine + ATP = L-histidyl-tRNA(His) + AMP + diphosphate + H(+). The polypeptide is Histidine--tRNA ligase (Listeria monocytogenes serotype 4b (strain F2365)).